Here is a 465-residue protein sequence, read N- to C-terminus: Mothers against decapentaplegic homolog 1 (465 aa).

Residue methionine 1 is modified to N-acetylmethionine. The MH1 domain occupies 12 to 136 (PAVKRLLGWK…YKRVESPVLP (125 aa)). The Zn(2+) site is built by cysteine 64, cysteine 109, cysteine 121, and histidine 126. Positions 162 to 249 (NEPHMPLNAT…QPMDTNMMAP (88 aa)) are disordered. Residues 179 to 210 (PNSHPFPHSPNSSYPNSPGSSSSTYPHSPTSS) show a composition bias toward low complexity. Over residues 221–232 (DTPPPAYLPPED) the composition is skewed to pro residues. In terms of domain architecture, MH2 spans 271–465 (WCSIVYYELN…SPHNPISSVS (195 aa)). The residue at position 322 (threonine 322) is a Phosphothreonine; by MINK1, TNIK and MAP4K4. Residues 418–428 (KGWGAEYHRQD) form an L3 loop region. A phosphoserine mark is found at serine 463 and serine 465.

The protein belongs to the dwarfin/SMAD family. As to quaternary structure, found in a complex with SMAD4 and YY1. Interacts with HGS, NANOG and ZCCHC12. Upon C-terminus phosphorylation: forms trimers with another SMAD1 and the co-SMAD SMAD4. Interacts with PEBP2-alpha subunit, CREB-binding protein (CBP), p300, SMURF1, SMURF2, USP15 and HOXC8. Associates with ZNF423 or ZNF521 in response to BMP2 leading to activate transcription of BMP target genes. Interacts with SKOR1. Interacts (via MH2 domain) with LEMD3. Binding to LEMD3 results in at least a partial reduction of receptor-mediated phosphorylation. Forms a ternary complex with PSMB4 and OAZ1 before PSMB4 is incorporated into the 20S proteasome. Interacts (via MH2 domain) with FAM83G (via MH2 domain); in a SMAD4-independent manner. Interacts with ZC3H3. Interacts with TMEM119. Interacts (via MH1 and MH2 domains) with ZNF8. Interacts with RANBP3L; the interaction increases when SMAD1 is not phosphorylated and mediates SMAD1 nuclear export. Interacts with EGR1; this interaction inhibits SMAD1 dephosphorylation. Interacts with SMAD6. Interacts with YAP1. Interacts with MTMR4; negatively regulates BMP signaling through SMAD1 dephosphorylation and retention in endosomes. Phosphorylation of the C-terminal SVS motif by BMP type 1 receptor kinase activates SMAD1 by promoting dissociation from the receptor and trimerization with SMAD4. Phosphorylation by ERK2 MAP kinase in response to EGF or HGF prevents SMAD1 nuclear accumulation and transcriptional activity in response to BMP. Dephosphorylation, probably by PPM1A, induces its export from the nucleus to the cytoplasm. Dephosphorylation is inhibited by association with EGR1. Phosphorylation by CDK8/9 creates binding sites for YAP1, and subsequent phosphorylation by GSK3 switches off YAP1 binding and adds binding sites for SMURF1. In terms of processing, ubiquitinated by SMAD-specific E3 ubiquitin ligase SMURF1, leading to its degradation. Monoubiquitinated, leading to prevent DNA-binding. Deubiquitination by USP15 alleviates inhibition and promotes activation of TGF-beta target genes. Dephosphorylation, probably by PPM1A, induces its export from the nucleus to the cytoplasm. Phospho-SMAD1 is ubiquitinated by CHIP leading to disruption of the SMAD1-SMAD4 complex.

It is found in the cytoplasm. Its subcellular location is the nucleus. Its function is as follows. Transcriptional modulator that plays a role in various cellular processes, including embryonic development, cell differentiation, and tissue homeostasis. Upon BMP ligand binding to their receptors at the cell surface, is phosphorylated by activated type I BMP receptors (BMPRIs) and associates with SMAD4 to form an heteromeric complex which translocates into the nucleus acting as transcription factor. In turn, the hetero-trimeric complex recognizes cis-regulatory elements containing Smad Binding Elements (SBEs) to modulate the outcome of the signaling network. SMAD1/OAZ1/PSMB4 complex mediates the degradation of the CREBBP/EP300 repressor SNIP1. Positively regulates BMP4-induced expression of odontogenic development regulator MSX1 following IPO7-mediated nuclear import. This is Mothers against decapentaplegic homolog 1 (SMAD1) from Bos taurus (Bovine).